The following is a 344-amino-acid chain: Polycomb group RING finger protein 2 (344 aa).

The RING-type zinc-finger motif lies at 18–57 (CALCGGYFIDATTIVECLHSFCKTCIVRYLETNKYCPMCD). Residues Lys-51 and Lys-88 each participate in a glycyl lysine isopeptide (Lys-Gly) (interchain with G-Cter in SUMO2) cross-link. The Nuclear localization signal motif lies at 81–95 (KLVPGLFKDEMKRRR). The segment covering 240–253 (TVPTPSEGTNTSGA) has biased composition (polar residues). The segment at 240 to 344 (TVPTPSEGTN…VNGAPVPPLT (105 aa)) is disordered. The segment covering 263–313 (APSPATLPATSSSLPSPATPSHGSPSSHGPPATHPTSPTPPSTASGATTAA) has biased composition (low complexity). Residues 314–328 (NGGSLNCLQTPSSTS) show a composition bias toward polar residues. Thr-344 carries the phosphothreonine modification.

As to quaternary structure, exists as both a monomer and homodimer. Component of a PRC1-like complex. Interacts with CBX8, RING1 and RNF2. Interacts with CBX7. Interacts with PHC2. Phosphorylated. Homodimer formation is regulated by phosphorylation with only unphosphorylated proteins forming homodimers. As to expression, detected in all tissues examined with high expression found in placenta lung and kidney and low expression, in liver, pancreas and skeletal muscle.

It is found in the nucleus. In terms of biological role, transcriptional repressor. Binds specifically to the DNA sequence 5'-GACTNGACT-3'. Has tumor suppressor activity. May play a role in control of cell proliferation and/or neural cell development. Regulates proliferation of early T progenitor cells by maintaining expression of HES1. Also plays a role in antero-posterior specification of the axial skeleton and negative regulation of the self-renewal activity of hematopoietic stem cells. Component of a Polycomb group (PcG) multiprotein PRC1-like complex, a complex class required to maintain the transcriptionally repressive state of many genes, including Hox genes, throughout development. PcG PRC1 complex acts via chromatin remodeling and modification of histones; it mediates monoubiquitination of histone H2A 'Lys-119', rendering chromatin heritably changed in its expressibility. Within the PRC1-like complex, regulates RNF2 ubiquitin ligase activity. The protein is Polycomb group RING finger protein 2 (PCGF2) of Homo sapiens (Human).